We begin with the raw amino-acid sequence, 325 residues long: Mitochondrial amidoxime-reducing component 1 (325 aa).

At 1–16 (MDLKEAFATIFDQNRK) the chain is on the mitochondrial matrix side. The chain crosses the membrane as a helical; Signal-anchor for type II membrane protein span at residues 17–36 (VALYAAGTTVAVLGLGLVFK). Over 37-325 (YMRREEKLTR…VGEPVYKITY (289 aa)) the chain is Cytoplasmic. Mo-molybdopterin-binding residues include Lys-59, Ser-60, and Arg-84. An MOSC N-terminal region region spans residues 85 to 175 (HWLVITEDGH…ADKPVRLVHY (91 aa)). Positions 179-323 (LKPQRPHEKE…LHVGEPVYKI (145 aa)) constitute an MOSC domain. Mo-molybdopterin-binding residues include Arg-230, Arg-264, Cys-265, and Tyr-305.

Requires Mo-molybdopterin as cofactor.

Its subcellular location is the mitochondrion outer membrane. The protein localises to the membrane. It catalyses the reaction N(omega)-hydroxy-L-arginine + 2 Fe(II)-[cytochrome b5] + 2 H(+) = L-arginine + 2 Fe(III)-[cytochrome b5] + H2O. Catalyzes the reduction of N-oxygenated molecules, acting as a counterpart of cytochrome P450 and flavin-containing monooxygenases in metabolic cycles. As a component of prodrug-converting system, reduces a multitude of N-hydroxylated prodrugs particularly amidoximes, leading to increased drug bioavailability. May be involved in mitochondrial N(omega)-hydroxy-L-arginine (NOHA) reduction, regulating endogenous nitric oxide levels and biosynthesis. Postulated to cleave the N-OH bond of N-hydroxylated substrates in concert with electron transfer from NADH to cytochrome b5 reductase then to cytochrome b5, the ultimate electron donor that primes the active site for substrate reduction. The polypeptide is Mitochondrial amidoxime-reducing component 1 (mtarc1) (Danio rerio (Zebrafish)).